Reading from the N-terminus, the 110-residue chain is uncharacterized protein (110 aa).

This is an uncharacterized protein from Archaeoglobus fulgidus (strain ATCC 49558 / DSM 4304 / JCM 9628 / NBRC 100126 / VC-16).